We begin with the raw amino-acid sequence, 65 residues long: Large ribosomal subunit protein bL35 (65 aa).

A disordered region spans residues 1 to 22 (MPKMKTKSSAKKRFKVTGSGKI).

It belongs to the bacterial ribosomal protein bL35 family.

The chain is Large ribosomal subunit protein bL35 from Flavobacterium psychrophilum (strain ATCC 49511 / DSM 21280 / CIP 103535 / JIP02/86).